A 473-amino-acid polypeptide reads, in one-letter code: Bifunctional protein HldE (473 aa).

A ribokinase region spans residues 1 to 318; the sequence is MKLTLPRYDQ…RAVQREEGSE (318 aa). ATP is bound at residue 194–197; it reads NLHE. D263 is a catalytic residue. A cytidylyltransferase region spans residues 343–473; that stretch reads FTNGCFDILH…TAIVEKIRNK (131 aa).

In the N-terminal section; belongs to the carbohydrate kinase PfkB family. The protein in the C-terminal section; belongs to the cytidylyltransferase family. As to quaternary structure, homodimer.

The enzyme catalyses D-glycero-beta-D-manno-heptose 7-phosphate + ATP = D-glycero-beta-D-manno-heptose 1,7-bisphosphate + ADP + H(+). It carries out the reaction D-glycero-beta-D-manno-heptose 1-phosphate + ATP + H(+) = ADP-D-glycero-beta-D-manno-heptose + diphosphate. Its pathway is nucleotide-sugar biosynthesis; ADP-L-glycero-beta-D-manno-heptose biosynthesis; ADP-L-glycero-beta-D-manno-heptose from D-glycero-beta-D-manno-heptose 7-phosphate: step 1/4. It functions in the pathway nucleotide-sugar biosynthesis; ADP-L-glycero-beta-D-manno-heptose biosynthesis; ADP-L-glycero-beta-D-manno-heptose from D-glycero-beta-D-manno-heptose 7-phosphate: step 3/4. Its function is as follows. Catalyzes the phosphorylation of D-glycero-D-manno-heptose 7-phosphate at the C-1 position to selectively form D-glycero-beta-D-manno-heptose-1,7-bisphosphate. In terms of biological role, catalyzes the ADP transfer from ATP to D-glycero-beta-D-manno-heptose 1-phosphate, yielding ADP-D-glycero-beta-D-manno-heptose. The protein is Bifunctional protein HldE of Ectopseudomonas mendocina (strain ymp) (Pseudomonas mendocina).